Reading from the N-terminus, the 174-residue chain is Interferon gamma (174 aa).

Residues 1–23 (MHTTRCILALLLCLTQAMSGCYC) form the signal peptide. Gln-24 is modified (pyrrolidone carboxylic acid). 2 N-linked (GlcNAc...) asparagine glycosylation sites follow: Asn-39 and Asn-106.

This sequence belongs to the type II (or gamma) interferon family. As to quaternary structure, homodimer. Interacts with IFNGR1 (via extracellular domain); this interaction promotes IFNGR1 dimerization. As to expression, released primarily from activated T lymphocytes.

Its subcellular location is the secreted. Functionally, type II interferon produced by immune cells such as T-cells and NK cells that plays crucial roles in antimicrobial, antiviral, and antitumor responses by activating effector immune cells and enhancing antigen presentation. Primarily signals through the JAK-STAT pathway after interaction with its receptor IFNGR1 to affect gene regulation. Upon IFNG binding, IFNGR1 intracellular domain opens out to allow association of downstream signaling components JAK2, JAK1 and STAT1, leading to STAT1 activation, nuclear translocation and transcription of IFNG-regulated genes. Many of the induced genes are transcription factors such as IRF1 that are able to further drive regulation of a next wave of transcription. Plays a role in class I antigen presentation pathway by inducing a replacement of catalytic proteasome subunits with immunoproteasome subunits. In turn, increases the quantity, quality, and repertoire of peptides for class I MHC loading. Increases the efficiency of peptide generation also by inducing the expression of activator PA28 that associates with the proteasome and alters its proteolytic cleavage preference. Up-regulates as well MHC II complexes on the cell surface by promoting expression of several key molecules such as cathepsins B/CTSB, H/CTSH, and L/CTSL. Participates in the regulation of hematopoietic stem cells during development and under homeostatic conditions by affecting their development, quiescence, and differentiation. This Mesocricetus auratus (Golden hamster) protein is Interferon gamma (IFNG).